We begin with the raw amino-acid sequence, 184 residues long: Elongation factor P (184 aa).

Belongs to the elongation factor P family.

The protein localises to the cytoplasm. It participates in protein biosynthesis; polypeptide chain elongation. In terms of biological role, involved in peptide bond synthesis. Stimulates efficient translation and peptide-bond synthesis on native or reconstituted 70S ribosomes in vitro. Probably functions indirectly by altering the affinity of the ribosome for aminoacyl-tRNA, thus increasing their reactivity as acceptors for peptidyl transferase. The sequence is that of Elongation factor P from Thermus thermophilus (strain ATCC BAA-163 / DSM 7039 / HB27).